Reading from the N-terminus, the 439-residue chain is Gap junction gamma-2 protein (439 aa).

Topologically, residues 1-25 (MTNMSWSFLTRLLEEIHNHSTFVGK) are cytoplasmic. A helical membrane pass occupies residues 26-46 (VWLTVLVVFRIVLTAVGGEAI). Topologically, residues 47-78 (YSDEQAKFTCNTRQPGCDNVCYDAFAPLSHVR) are extracellular. A helical membrane pass occupies residues 79-99 (FWVFQIVVISTPSVMYLGYAV). Over 100–216 (HRLARASEQE…EGLMRVYVAQ (117 aa)) the chain is Cytoplasmic. Residues 108-178 (QERRRALRRR…AEEAGAEEAC (71 aa)) are disordered. The span at 112 to 125 (RALRRRPGPRRAPR) shows a compositional bias: basic residues. Acidic residues predominate over residues 140-174 (DLGEEEPMLGLGEEEEEEETGAAEGAGEEAEEAGA). The helical transmembrane segment at 217 to 237 (LVARAAFEVAFLVGQYLLYGF) threads the bilayer. Topologically, residues 238–265 (EVRPFFPCSRQPCPHVVDCFVSRPTEKT) are extracellular. Residues 266–286 (VFLLVMYVVSCLCLLLNLCEM) form a helical membrane-spanning segment. Residues 287-439 (AHLGLGSAQD…SRDGKTTVWI (153 aa)) lie on the Cytoplasmic side of the membrane. A disordered region spans residues 364–439 (AGDRDRDSSP…SRDGKTTVWI (76 aa)). Ser-371 carries the phosphoserine modification. Residues 378–393 (PAASRGPPRAGAPASR) are compositionally biased toward low complexity.

The protein belongs to the connexin family. Gamma-type subfamily. In terms of assembly, a connexon is composed of a hexamer of connexins. Interacts with TJP1. Expressed in central nervous system, in sciatic nerve and sural nerve. Also detected in skeletal muscles.

It is found in the cell membrane. The protein localises to the cell junction. The protein resides in the gap junction. One gap junction consists of a cluster of closely packed pairs of transmembrane channels, the connexons, through which materials of low MW diffuse from one cell to a neighboring cell. May play a role in myelination in central and peripheral nervous systems. The chain is Gap junction gamma-2 protein (GJC2) from Homo sapiens (Human).